The following is a 137-amino-acid chain: Probable disulfide formation protein C (137 aa).

A helical membrane pass occupies residues 6–25 (ENLMLGSWLTALTAMLGSLY). Cys-35 and Cys-38 form a disulfide bridge. 2 helical membrane passes run 40–59 (YQRIIMYPLVLILFIGYLKR) and 66–83 (YSLWFSLIGMFTSLYHYS). A disulfide bridge connects residues Cys-97 and Cys-102. A helical transmembrane segment spans residues 111-133 (GFVTIPFLAFTAFVIIFICSLLI).

Belongs to the DsbB family. BdbC subfamily.

Its subcellular location is the cell membrane. Its function is as follows. Required for disulfide bond formation in some proteins. The polypeptide is Probable disulfide formation protein C (Halalkalibacterium halodurans (strain ATCC BAA-125 / DSM 18197 / FERM 7344 / JCM 9153 / C-125) (Bacillus halodurans)).